Consider the following 120-residue polypeptide: Myohemerythrin (120 aa).

Positions 26, 56, 60, 75, 79, 108, and 113 each coordinate Fe cation.

It belongs to the hemerythrin family.

Functionally, myohemerythrin is an oxygen-binding protein found in the retractor muscles of certain worms. The oxygen-binding site contains two iron atoms. This Sipunculus nudus (Sipunculan worm) protein is Myohemerythrin.